A 535-amino-acid chain; its full sequence is Probable glucomannan 4-beta-mannosyltransferase 14 (535 aa).

Residues 42–62 (QVVSVLLFVDAAYMAIVVAIV) form a helical membrane-spanning segment. The active site involves D131. Residues D193 and D195 each coordinate substrate. D287 is a catalytic residue. Helical transmembrane passes span 366–386 (IVVHIFTFVFYCVILPATVIF), 403–423 (ITILNAIATPKSFYLILYWIL), 482–502 (IMVGMYLFICGYYDFVFGRTY), and 503–523 (LYVYLFLQSIAFFVVGVGYVG).

This sequence belongs to the glycosyltransferase 2 family. Plant cellulose synthase-like A subfamily.

It is found in the golgi apparatus membrane. The catalysed reaction is GDP-mannose + (glucomannan)n = GDP + (glucomannan)n+1.. Probable mannan synthase which consists of a 4-beta-mannosyltransferase activity on mannan using GDP-mannose. The beta-1,4-mannan product is the backbone for galactomannan synthesis by galactomannan galactosyltransferase. Galactomannan is a noncellulosic polysaccharides of plant cell wall. The chain is Probable glucomannan 4-beta-mannosyltransferase 14 from Arabidopsis thaliana (Mouse-ear cress).